The following is a 293-amino-acid chain: MAAPSGASPQSEYIQHHLVHLNNIGEKQSVIAQFNVINYDSLFWSILMGLLVVFCLWLAARRATAGVPGRFQGFIEMIVDMVDDQAKSIVTNAKSRLFVAPLALTVFLWIILMNALDLLPVDLLPSIWRMTGLGAEHGDPLYYHRILPTADLNVPMGMSLGVLLLMFYYGIKIKHPGGFVKELFTAPFHAHGLASLVLAPFNLLLNLIEYAAKSVSLGMRLFGNMFAGELIFMLIALLGGAWTGFNGASIGLGIGHVLAGSVWAIFHILIVLLQAFIFMMLTLVYIGQAHEGH.

6 helical membrane passes run 40–60 (DSLF…WLAA), 97–117 (LFVA…NALD), 151–171 (DLNV…YYGI), 188–208 (FHAH…LNLI), 225–245 (MFAG…WTGF), and 264–284 (AIFH…LTLV).

This sequence belongs to the ATPase A chain family. F-type ATPases have 2 components, CF(1) - the catalytic core - and CF(0) - the membrane proton channel. CF(1) has five subunits: alpha(3), beta(3), gamma(1), delta(1), epsilon(1). CF(0) has three main subunits: a(1), b(2) and c(9-12). The alpha and beta chains form an alternating ring which encloses part of the gamma chain. CF(1) is attached to CF(0) by a central stalk formed by the gamma and epsilon chains, while a peripheral stalk is formed by the delta and b chains.

Its subcellular location is the cell inner membrane. Its function is as follows. Key component of the proton channel; it plays a direct role in the translocation of protons across the membrane. The polypeptide is ATP synthase subunit a (Bordetella bronchiseptica (strain ATCC BAA-588 / NCTC 13252 / RB50) (Alcaligenes bronchisepticus)).